A 229-amino-acid chain; its full sequence is Indole-3-glycerol phosphate synthase (229 aa).

This sequence belongs to the TrpC family.

It catalyses the reaction 1-(2-carboxyphenylamino)-1-deoxy-D-ribulose 5-phosphate + H(+) = (1S,2R)-1-C-(indol-3-yl)glycerol 3-phosphate + CO2 + H2O. It participates in amino-acid biosynthesis; L-tryptophan biosynthesis; L-tryptophan from chorismate: step 4/5. The sequence is that of Indole-3-glycerol phosphate synthase from Pyrococcus abyssi (strain GE5 / Orsay).